A 302-amino-acid polypeptide reads, in one-letter code: tRNA pseudouridine synthase B (302 aa).

The active-site Nucleophile is Asp-42.

It belongs to the pseudouridine synthase TruB family. Type 1 subfamily.

The enzyme catalyses uridine(55) in tRNA = pseudouridine(55) in tRNA. Responsible for synthesis of pseudouridine from uracil-55 in the psi GC loop of transfer RNAs. This Leifsonia xyli subsp. xyli (strain CTCB07) protein is tRNA pseudouridine synthase B.